The primary structure comprises 374 residues: DNA-directed RNA polymerase subunit alpha (374 aa).

The tract at residues 1–270 (MIFDEDSSSV…DQFQQFINFD (270 aa)) is alpha N-terminal domain (alpha-NTD). The interval 282–374 (KDVLPYDSNL…ESLSKQYSEE (93 aa)) is alpha C-terminal domain (alpha-CTD).

It belongs to the RNA polymerase alpha chain family. In terms of assembly, homodimer. The RNAP catalytic core consists of 2 alpha, 1 beta, 1 beta' and 1 omega subunit. When a sigma factor is associated with the core the holoenzyme is formed, which can initiate transcription.

The enzyme catalyses RNA(n) + a ribonucleoside 5'-triphosphate = RNA(n+1) + diphosphate. Functionally, DNA-dependent RNA polymerase catalyzes the transcription of DNA into RNA using the four ribonucleoside triphosphates as substrates. This Ehrlichia ruminantium (strain Welgevonden) protein is DNA-directed RNA polymerase subunit alpha.